The following is a 145-amino-acid chain: Cystin-1 (145 aa).

The disordered stretch occupies residues 1 to 129 (MGSGSSRSGR…PEGQSAISYD (129 aa)). The N-myristoyl glycine moiety is linked to residue Gly-2. Positions 29 to 33 (ASEGG) match the Ciliary targeting motif motif. Ser-116 bears the Phosphoserine mark.

In terms of assembly, interacts (when myristoylated) with UNC119 and UNC119B; interaction is required for localization to cilium. As to expression, expressed primarily in the kidney and liver. Expressed at lower levels in the lung, brain and heart.

It is found in the cell projection. It localises to the cilium membrane. Its subcellular location is the cytoplasm. The protein resides in the cytoskeleton. The protein localises to the cilium axoneme. The sequence is that of Cystin-1 (Cys1) from Mus musculus (Mouse).